The primary structure comprises 283 residues: Pantothenate synthetase (283 aa).

30–37 (MGYLHDGH) serves as a coordination point for ATP. Catalysis depends on histidine 37, which acts as the Proton donor. Residue glutamine 61 participates in (R)-pantoate binding. Position 61 (glutamine 61) interacts with beta-alanine. Residue 147–150 (GKKD) participates in ATP binding. Glutamine 153 provides a ligand contact to (R)-pantoate. ATP is bound by residues isoleucine 176 and 184–187 (MSSR).

Belongs to the pantothenate synthetase family. Homodimer.

It localises to the cytoplasm. It catalyses the reaction (R)-pantoate + beta-alanine + ATP = (R)-pantothenate + AMP + diphosphate + H(+). Its pathway is cofactor biosynthesis; (R)-pantothenate biosynthesis; (R)-pantothenate from (R)-pantoate and beta-alanine: step 1/1. In terms of biological role, catalyzes the condensation of pantoate with beta-alanine in an ATP-dependent reaction via a pantoyl-adenylate intermediate. The protein is Pantothenate synthetase of Geobacter sulfurreducens (strain ATCC 51573 / DSM 12127 / PCA).